Consider the following 376-residue polypeptide: Calcium uniporter protein, mitochondrial (376 aa).

A mitochondrion-targeting transit peptide spans 1–34 (MAAKVCRSVLLLSRSSGAVASSAYPAFGVSSQRH). Topologically, residues 35–257 (QGTKTEALSM…LSKKAERRTT (223 aa)) are mitochondrial matrix. Positions 99–189 (VSVVYQNGLP…TSYLVQPPRR (91 aa)) are N-terminal MCU domain. Residues 213-254 (TLRIEEHQLNKERELIGRLEDLNSQLQPLEKVKEELSKKAER) are a coiled coil. A helical transmembrane segment spans residues 258-280 (WVLWGGMAYMATQFGILARLTWW). The Mitochondrial intermembrane portion of the chain corresponds to 281–289 (EYSWDIMEP). A Selectivity filter motif is present at residues 284 to 292 (WDIMEPVTY). Glu-288 is a Ca(2+) binding site. Residues 290 to 309 (VTYFITYGTAMAMYAYFVLT) form a helical membrane-spanning segment. The interval 309-314 (TRQEYL) is juxtamembrane helix. Over 310–376 (RQEYLYPDAR…PIQQIDTSKD (67 aa)) the chain is Mitochondrial matrix. The stretch at 336–363 (FDIEKYNKLKDAIAEAELDLKRLRDPLQ) forms a coiled coil.

Belongs to the MCU (TC 1.A.77) family. As to quaternary structure, homotetramer. Component of the uniplex complex.

The protein resides in the mitochondrion inner membrane. The catalysed reaction is Ca(2+)(in) = Ca(2+)(out). With respect to regulation, MCU channel activity is regulated by the heterodimer composed of micu1 and micu2, which act as calcium-sensors. At low calcium levels, micu1 occludes the pore of the MCU channel, preventing mitochondrial calcium uptake. At higher calcium levels, calcium-binding to micu1 and micu2 induces a conformational change that weakens mcu-micu1 interactions and moves the micu1-micu2 heterodimer away from the pore, allowing calcium permeation through the channel. MCU channel activity is gated by emre/smdt1 via the juxtamembrane helix loop. Inhibited by ruthenium red or its derivative Ru360. Its function is as follows. Channel-forming and calcium-conducting subunit of the mitochondrial inner membrane calcium uniporter complex (uniplex), which mediates calcium uptake into the mitochondrial matrix. Mcu channel activity is regulated by the calcium-sensor subunits of the uniplex micu1 and micu2. Mitochondrial calcium homeostasis plays key roles in cellular physiology and regulates ATP production, cytoplasmic calcium signals and activation of cell death pathways. Involved in buffering the amplitude of systolic calcium rises in cardiomyocytes. While dispensable for baseline homeostatic cardiac function, acts as a key regulator of short-term mitochondrial calcium loading underlying a 'fight-or-flight' response during acute stress: acts by mediating a rapid increase of mitochondrial calcium in pacemaker cells. Mitochondrial calcium uptake in skeletal muscle cells is involved in muscle size in adults. The protein is Calcium uniporter protein, mitochondrial of Danio rerio (Zebrafish).